The following is a 147-amino-acid chain: Large ribosomal subunit protein uL13 (147 aa).

The protein belongs to the universal ribosomal protein uL13 family. Part of the 50S ribosomal subunit.

In terms of biological role, this protein is one of the early assembly proteins of the 50S ribosomal subunit, although it is not seen to bind rRNA by itself. It is important during the early stages of 50S assembly. This is Large ribosomal subunit protein uL13 from Salinispora arenicola (strain CNS-205).